A 254-amino-acid chain; its full sequence is MTPTIRPLIAGNWKMHGTESSLGELKAIGSGFVEAAGAGADGVICVPATLLARASDILAKTPVATGGQDCHPATSGAHTGDIAAEMLADCGASYVIVGHSERRTDHHEADEDVAAKAEAAWRAGLTAIICIGETKIQREAGETLSVLSRQIAGSVPPGATAKNSVIAYEPVWAIGTGLTPTVEDVAQAHAHLRAELGMKLGIEADGMRLLYGGSVKPSNAGELLSILNVDGALIGGASLKAADFLAISAAVKGK.

A substrate-binding site is contributed by 12–14; sequence NWK. His99 serves as the catalytic Electrophile. Residue Glu169 is the Proton acceptor of the active site. Residues Gly175, Ser214, and 235–236 contribute to the substrate site; that span reads GG.

The protein belongs to the triosephosphate isomerase family. As to quaternary structure, homodimer.

The protein resides in the cytoplasm. It carries out the reaction D-glyceraldehyde 3-phosphate = dihydroxyacetone phosphate. It functions in the pathway carbohydrate biosynthesis; gluconeogenesis. Its pathway is carbohydrate degradation; glycolysis; D-glyceraldehyde 3-phosphate from glycerone phosphate: step 1/1. Functionally, involved in the gluconeogenesis. Catalyzes stereospecifically the conversion of dihydroxyacetone phosphate (DHAP) to D-glyceraldehyde-3-phosphate (G3P). The protein is Triosephosphate isomerase of Chelativorans sp. (strain BNC1).